A 494-amino-acid chain; its full sequence is Putative transporter SVOPL (494 aa).

10 consecutive transmembrane segments (helical) span residues isoleucine 48–isoleucine 68, valine 86–leucine 106, phenylalanine 121–valine 141, valine 179–isoleucine 199, tryptophan 203–proline 223, threonine 281–alanine 301, isoleucine 350–leucine 370, leucine 385–methionine 405, alanine 431–isoleucine 451, and phenylalanine 460–threonine 480.

Belongs to the major facilitator superfamily.

It is found in the membrane. The sequence is that of Putative transporter SVOPL (Svopl) from Mus musculus (Mouse).